Consider the following 267-residue polypeptide: Tetrahydromethanopterin S-methyltransferase subunit C (267 aa).

7 consecutive transmembrane segments (helical) span residues 19-39, 75-95, 97-117, 140-160, 162-182, 198-218, and 221-241; these read IMALGIVGGLVGIYLGNFAPP, IGMLALGMGILAALFGLSVGG, AGPIVAIVVAAIIGGVIGALA, TLVILGLSVVIAGSFDFASVV, YVVANGYIALIFIIGGMGILH, LMLAVEKGAIALIIAGFASSL, and GLMAAGLNMLIGIIIWYVAFS.

The protein belongs to the MtrC family. As to quaternary structure, the complex is composed of 8 subunits; MtrA, MtrB, MtrC, MtrD, MtrE, MtrF, MtrG and MtrH.

Its subcellular location is the cell membrane. It catalyses the reaction 5-methyl-5,6,7,8-tetrahydromethanopterin + coenzyme M + 2 Na(+)(in) = 5,6,7,8-tetrahydromethanopterin + methyl-coenzyme M + 2 Na(+)(out). The protein operates within one-carbon metabolism; methanogenesis from CO(2); methyl-coenzyme M from 5,10-methylene-5,6,7,8-tetrahydromethanopterin: step 2/2. Part of a complex that catalyzes the formation of methyl-coenzyme M and tetrahydromethanopterin from coenzyme M and methyl-tetrahydromethanopterin. This is an energy-conserving, sodium-ion translocating step. The protein is Tetrahydromethanopterin S-methyltransferase subunit C of Methanosarcina barkeri (strain Fusaro / DSM 804).